The sequence spans 330 residues: Succinylglutamate desuccinylase (330 aa).

Positions 53, 56, and 147 each coordinate Zn(2+). Residue E210 is part of the active site.

This sequence belongs to the AspA/AstE family. Succinylglutamate desuccinylase subfamily. Zn(2+) is required as a cofactor.

The enzyme catalyses N-succinyl-L-glutamate + H2O = L-glutamate + succinate. Its pathway is amino-acid degradation; L-arginine degradation via AST pathway; L-glutamate and succinate from L-arginine: step 5/5. Its function is as follows. Transforms N(2)-succinylglutamate into succinate and glutamate. This is Succinylglutamate desuccinylase from Yersinia pseudotuberculosis serotype O:1b (strain IP 31758).